The primary structure comprises 299 residues: ATP phosphoribosyltransferase (299 aa).

The protein belongs to the ATP phosphoribosyltransferase family. Long subfamily. As to quaternary structure, equilibrium between an active dimeric form, an inactive hexameric form and higher aggregates. Interconversion between the various forms is largely reversible and is influenced by the natural substrates and inhibitors of the enzyme. Mg(2+) is required as a cofactor.

The protein resides in the cytoplasm. It catalyses the reaction 1-(5-phospho-beta-D-ribosyl)-ATP + diphosphate = 5-phospho-alpha-D-ribose 1-diphosphate + ATP. Its pathway is amino-acid biosynthesis; L-histidine biosynthesis; L-histidine from 5-phospho-alpha-D-ribose 1-diphosphate: step 1/9. With respect to regulation, feedback inhibited by histidine. Functionally, catalyzes the condensation of ATP and 5-phosphoribose 1-diphosphate to form N'-(5'-phosphoribosyl)-ATP (PR-ATP). Has a crucial role in the pathway because the rate of histidine biosynthesis seems to be controlled primarily by regulation of HisG enzymatic activity. This Buchnera aphidicola subsp. Schizaphis graminum (strain Sg) protein is ATP phosphoribosyltransferase (hisG).